The following is a 543-amino-acid chain: Putative cysteine ligase BshC (543 aa).

Positions 419–440 (DEKNNDNIDEVVEEVKAQISDI) form a coiled coil.

The protein belongs to the BshC family.

Its function is as follows. Involved in bacillithiol (BSH) biosynthesis. May catalyze the last step of the pathway, the addition of cysteine to glucosamine malate (GlcN-Mal) to generate BSH. This is Putative cysteine ligase BshC from Oceanobacillus iheyensis (strain DSM 14371 / CIP 107618 / JCM 11309 / KCTC 3954 / HTE831).